Reading from the N-terminus, the 386-residue chain is NADPH-dependent alkenal/one oxidoreductase, chloroplastic (386 aa).

Belongs to the zinc-containing alcohol dehydrogenase family. Quinone oxidoreductase subfamily.

It localises to the plastid. The protein resides in the chloroplast. Functionally, reduces the double bond in short-chain unsaturated carbonyls. Acts preferentially on alpha,beta-unsaturated ketones rather on alpha,beta-unsaturated aldehydes. Has no activity with (E)-2-hexenal and (E)-2-pentenal. Contributes to detoxify stromal reactive carbonyls produced under oxidative stress. This chain is NADPH-dependent alkenal/one oxidoreductase, chloroplastic, found in Arabidopsis thaliana (Mouse-ear cress).